The sequence spans 257 residues: Flagellar brake protein YcgR 2 (257 aa).

The PilZ domain occupies Gln131–Thr244.

This sequence belongs to the YcgR family. As to quaternary structure, monomer. Interacts with the flagellar basal bodies.

It localises to the bacterial flagellum basal body. Acts as a flagellar brake, regulating swimming and swarming in a bis-(3'-5') cyclic diguanylic acid (c-di-GMP)-dependent manner. Binds 1 c-di-GMP dimer per subunit. Increasing levels of c-di-GMP lead to decreased motility. This is Flagellar brake protein YcgR 2 from Paraburkholderia phytofirmans (strain DSM 17436 / LMG 22146 / PsJN) (Burkholderia phytofirmans).